The primary structure comprises 236 residues: 2,3,4,5-tetrahydropyridine-2,6-dicarboxylate N-acetyltransferase (236 aa).

This sequence belongs to the transferase hexapeptide repeat family. DapH subfamily.

The catalysed reaction is (S)-2,3,4,5-tetrahydrodipicolinate + acetyl-CoA + H2O = L-2-acetamido-6-oxoheptanedioate + CoA. It participates in amino-acid biosynthesis; L-lysine biosynthesis via DAP pathway; LL-2,6-diaminopimelate from (S)-tetrahydrodipicolinate (acetylase route): step 1/3. Catalyzes the transfer of an acetyl group from acetyl-CoA to tetrahydrodipicolinate. The sequence is that of 2,3,4,5-tetrahydropyridine-2,6-dicarboxylate N-acetyltransferase from Clostridium botulinum (strain Alaska E43 / Type E3).